The following is a 212-amino-acid chain: Guanylate kinase (212 aa).

Residues 5–187 (GILCIISAPS…ALMHLQSIML (183 aa)) form the Guanylate kinase-like domain. 12–19 (APSGTGKS) is a binding site for ATP.

This sequence belongs to the guanylate kinase family.

The protein resides in the cytoplasm. The catalysed reaction is GMP + ATP = GDP + ADP. Its function is as follows. Essential for recycling GMP and indirectly, cGMP. The chain is Guanylate kinase from Blochmanniella pennsylvanica (strain BPEN).